The chain runs to 123 residues: Prismalin-14 (123 aa).

Residues Met1–Ala16 form the signal peptide.

In terms of tissue distribution, prismatic layer of shell (at protein level). Expressed primarily in the mantle with highest level in the mantle edge and lower level in the mantle pallium.

The protein resides in the secreted. May be involved in calcification of the prismatic layer of the shell. This is Prismalin-14 from Margaritifera margaritifera (Freshwater pearl mussel).